A 295-amino-acid polypeptide reads, in one-letter code: Trimeric intracellular cation channel type A (295 aa).

At 1-18 the chain is on the lumenal side; it reads MELLSALSLGELALSFSR. Residues 19–39 traverse the membrane as a helical segment; the sequence is VPLFPVFDLSYFIVSILYLKY. At 40-51 the chain is on the cytoplasmic side; sequence EPGAVELSRRHP. A helical transmembrane segment spans residues 52–72; the sequence is VASWLCAMLHCFGSYILADLL. The Lumenal portion of the chain corresponds to 73-85; sequence LGEPLIDYFSNNS. Gly74 is a Ca(2+) binding site. Residues 86–106 traverse the membrane as a helical segment; it reads SILLASAVWYLIFFCPLDLFY. Over 107-144 the chain is Cytoplasmic; sequence KCVCFLPVKLIFVAMKEVVRVRKIAVGIHHAHHHYHHG. 2 residues coordinate a 1,2-diacyl-sn-glycero-3-phospho-(1D-myo-inositol-4,5-bisphosphate): Lys122 and Arg126. Residues 145–165 form a helical membrane-spanning segment; the sequence is WFIMIATGWVKGSGVALLSNV. The Lumenal segment spans residues 166 to 178; that stretch reads EQLLRGVWKPETN. A helical membrane pass occupies residues 179–199; that stretch reads EILHMSFPTKASLYGAILFTL. Residues 200–209 are Cytoplasmic-facing; sequence QQTRWLPVSK. Residues 210-230 traverse the membrane as a helical segment; the sequence is ASLIFIFTMFMVSCKVFLTAT. The Lumenal portion of the chain corresponds to 231–234; sequence HSHS. The chain crosses the membrane as a helical span at residues 235 to 255; sequence SPFDVLEAYVCPVLFGTGSGG. At 256 to 295 the chain is on the cytoplasmic side; sequence DHPQDNHGAWPGGPPSGALATKSKEELSEGSRKKKTKKAD. Residues 256 to 295 form a disordered region; it reads DHPQDNHGAWPGGPPSGALATKSKEELSEGSRKKKTKKAD. Residues 277-286 show a composition bias toward basic and acidic residues; it reads KSKEELSEGS.

It belongs to the TMEM38 family. In terms of assembly, homotrimer; conformation seems to be controled by binding to diacylglycerol (DAG).

It is found in the sarcoplasmic reticulum membrane. It localises to the nucleus membrane. It catalyses the reaction K(+)(in) = K(+)(out). Channel activity is activated by a change of voltage within the sarcoplasmic reticulum lumen and blocked by luminal high Ca(2+) levels. Functionally, intracellular monovalent cation channel required for maintenance of rapid intracellular calcium release. Acts as a potassium counter-ion channel that functions in synchronization with calcium release from intracellular stores. Opened by a change of voltage within the sarcoplasmic reticulum lumen. This Oryctolagus cuniculus (Rabbit) protein is Trimeric intracellular cation channel type A.